The chain runs to 382 residues: Chaperone protein DnaJ (382 aa).

Positions 5-70 constitute a J domain; the sequence is DYYEVLGLQK…QKRAAYDQYG (66 aa). Residues 134 to 212 form a CR-type zinc finger; sequence GTTKDIQINT…CHGEGRVHKK (79 aa). Zn(2+) contacts are provided by C147, C150, C164, C167, C186, C189, C200, and C203. 4 CXXCXGXG motif repeats span residues 147-154, 164-171, 186-193, and 200-207; these read CDSCGGSG, CPHCHGSG, CPTCHGSG, and CRNCHGEG.

Belongs to the DnaJ family. Homodimer. Zn(2+) is required as a cofactor.

It is found in the cytoplasm. Its function is as follows. Participates actively in the response to hyperosmotic and heat shock by preventing the aggregation of stress-denatured proteins and by disaggregating proteins, also in an autonomous, DnaK-independent fashion. Unfolded proteins bind initially to DnaJ; upon interaction with the DnaJ-bound protein, DnaK hydrolyzes its bound ATP, resulting in the formation of a stable complex. GrpE releases ADP from DnaK; ATP binding to DnaK triggers the release of the substrate protein, thus completing the reaction cycle. Several rounds of ATP-dependent interactions between DnaJ, DnaK and GrpE are required for fully efficient folding. Also involved, together with DnaK and GrpE, in the DNA replication of plasmids through activation of initiation proteins. In Haemophilus influenzae (strain ATCC 51907 / DSM 11121 / KW20 / Rd), this protein is Chaperone protein DnaJ.